The sequence spans 460 residues: MKNEMWSGRFSGASDELLKEFNASLNVDKTLFNEDIQGSIAHATMLESCGILKKEELDAIVKGLEQVRSEIEQGKFIFDIKDEDIHMAIEKRLSEIIGSEIGGRLHTARSRNDQVATDFKLFVKKSHIELIKLLKELIQTMLEHAKVHKKTIMPSFTHLQHAQPVSFSFYILAYAFMLMRDVKRLQNSLELAGFSPLGSCACAGTSYATNRELSAKILGFKDIMPNAMDGVSDRDFVLDLLYDIAVIFTHTSRLCEEMILFSSSEFSFITISDSFSTGSSIMPQKKNPDVCELIRGKTGRVYGNLISLLTIMKALPLAYNKDMQEDKEGLFDSVKTAKDSLIILNVMLKEIRINKENMLNACKKGHLLATDLADYLVREKNIPFRKAHFIVGNVVAQAEVQGIDISEIKDLSKIDPIFDEKAMELLNFEFSLNSKQSEGSSSIASVEKQIQILQEFIKKL.

The protein belongs to the lyase 1 family. Argininosuccinate lyase subfamily.

It localises to the cytoplasm. The catalysed reaction is 2-(N(omega)-L-arginino)succinate = fumarate + L-arginine. The protein operates within amino-acid biosynthesis; L-arginine biosynthesis; L-arginine from L-ornithine and carbamoyl phosphate: step 3/3. The chain is Argininosuccinate lyase from Campylobacter jejuni subsp. doylei (strain ATCC BAA-1458 / RM4099 / 269.97).